We begin with the raw amino-acid sequence, 622 residues long: Chaperone protein HscA homolog (622 aa).

It belongs to the heat shock protein 70 family.

Chaperone involved in the maturation of iron-sulfur cluster-containing proteins. Has a low intrinsic ATPase activity which is markedly stimulated by HscB. The sequence is that of Chaperone protein HscA homolog from Delftia acidovorans (strain DSM 14801 / SPH-1).